The following is a 434-amino-acid chain: Protein arginine N-methyltransferase 2 (434 aa).

A disordered region spans residues 155-198 (IQGEETTEEERKEEEPSNTSDIIDEQKVEQPKEDLKEDPSSNQE). Basic and acidic residues predominate over residues 178-193 (DEQKVEQPKEDLKEDP). The region spanning 193–434 (PSSNQETYLK…YHPEARFMDV (242 aa)) is the RMT2 domain. Residues Tyr200, Met230, 258–263 (FGMGII), 279–281 (EAH), 306–307 (WQ), and Asp327 contribute to the S-adenosyl-L-methionine site.

The protein belongs to the class I-like SAM-binding methyltransferase superfamily. RMT2 methyltransferase family. As to quaternary structure, monomer.

Its subcellular location is the cytoplasm. The protein resides in the nucleus. Functionally, S-adenosyl-L-methionine-dependent protein-arginine N-methyltransferase that methylates the delta-nitrogen atom of arginine residues to form N5-methylarginine (type IV) in target proteins. Monomethylates ribosomal protein L12. The chain is Protein arginine N-methyltransferase 2 from Debaryomyces hansenii (strain ATCC 36239 / CBS 767 / BCRC 21394 / JCM 1990 / NBRC 0083 / IGC 2968) (Yeast).